Here is a 782-residue protein sequence, read N- to C-terminus: Spastin (782 aa).

A disordered region spans residues 1-103; it reads MVRTKNQSSS…GNAPRGGNSS (103 aa). Residues 1 to 115 are Cytoplasmic-facing; the sequence is MVRTKNQSSS…KQNLYVVSFP (115 aa). A required for localization to punctate cytoplasmic foci region spans residues 1-212; that stretch reads MVRTKNQSSS…RAIQPLEMAG (212 aa). A compositionally biased stretch (low complexity) spans 8-19; it reads SSSSSASSSTKS. Positions 25–34 are enriched in polar residues; it reads GGTTNRSRSC. Low complexity-rich tracts occupy residues 44–75 and 84–93; these read SKSS…GSSP and TTDADLTPTS. An intramembrane region (helical) is located at residues 116–136; that stretch reads IIFLFNVLRSLIYQLFCIFRY. Topologically, residues 137–782 are cytoplasmic; that stretch reads LYGASTKVIY…WSQDYGDITI (646 aa). The sufficient for interaction with microtubules and microtubule severing stretch occupies residues 210 to 782; the sequence is MAGNRAGGNY…WSQDYGDITI (573 aa). Residues 235–310 form the MIT domain; the sequence is HRRAFEYISK…SMARDRLHFL (76 aa). Residues 325 to 479 form a disordered region; sequence KEQQQKKKSP…GSGSGASTPM (155 aa). The segment covering 334–343 has biased composition (low complexity); it reads PQQQPQQQQQ. 2 stretches are compositionally biased toward polar residues: residues 408–426 and 447–463; these read NKSQ…STSV and QFSS…RTPI. The required for interaction with microtubules stretch occupies residues 465–479; sequence NNAAGGSGSGASTPM. 547–554 lines the ATP pocket; the sequence is GPPGNGKT.

It belongs to the AAA ATPase family. Spastin subfamily. In terms of assembly, homohexamer. The homohexamer is stabilized by ATP-binding. The homohexamer may adopt a ring conformation through which microtubules pass prior to being severed. Interacts with microtubules. Interacts with atl; may be involved in microtubule dynamics.

The protein resides in the membrane. It localises to the cytoplasm. It is found in the cytoskeleton. The protein localises to the microtubule organizing center. Its subcellular location is the centrosome. The protein resides in the chromosome. It localises to the lipid droplet. The enzyme catalyses n ATP + n H2O + a microtubule = n ADP + n phosphate + (n+1) alpha/beta tubulin heterodimers.. In terms of biological role, ATP-dependent microtubule severing protein. Stimulates microtubule minus-end depolymerization and poleward microtubule flux in the mitotic spindle. Regulates microtubule stability in the neuromuscular junction synapse. Involved in lipid metabolism by regulating the size and distribution of lipid droplets. Involved in axon regeneration by regulating microtubule severing. This is Spastin from Drosophila grimshawi (Hawaiian fruit fly).